A 155-amino-acid polypeptide reads, in one-letter code: S-ribosylhomocysteine lyase (155 aa).

Fe cation contacts are provided by histidine 58, histidine 62, and cysteine 125.

This sequence belongs to the LuxS family. As to quaternary structure, homodimer. It depends on Fe cation as a cofactor.

The catalysed reaction is S-(5-deoxy-D-ribos-5-yl)-L-homocysteine = (S)-4,5-dihydroxypentane-2,3-dione + L-homocysteine. Involved in the synthesis of autoinducer 2 (AI-2) which is secreted by bacteria and is used to communicate both the cell density and the metabolic potential of the environment. The regulation of gene expression in response to changes in cell density is called quorum sensing. Catalyzes the transformation of S-ribosylhomocysteine (RHC) to homocysteine (HC) and 4,5-dihydroxy-2,3-pentadione (DPD). The chain is S-ribosylhomocysteine lyase from Helicobacter pylori (strain HPAG1).